Reading from the N-terminus, the 202-residue chain is Small ribosomal subunit protein uS4c (202 aa).

The S4 RNA-binding domain maps to 90 to 158; it reads MRLDNIIFRL…ITKNIELSQK (69 aa).

Belongs to the universal ribosomal protein uS4 family. As to quaternary structure, part of the 30S ribosomal subunit. Contacts protein S5. The interaction surface between S4 and S5 is involved in control of translational fidelity.

It is found in the plastid. The protein resides in the chloroplast. Functionally, one of the primary rRNA binding proteins, it binds directly to 16S rRNA where it nucleates assembly of the body of the 30S subunit. With S5 and S12 plays an important role in translational accuracy. This is Small ribosomal subunit protein uS4c (rps4) from Marchantia romanica (Liverwort).